A 506-amino-acid polypeptide reads, in one-letter code: Lysine--tRNA ligase (506 aa).

Mg(2+) is bound by residues Glu416 and Glu423.

Belongs to the class-II aminoacyl-tRNA synthetase family. Homodimer. Mg(2+) serves as cofactor.

The protein resides in the cytoplasm. The enzyme catalyses tRNA(Lys) + L-lysine + ATP = L-lysyl-tRNA(Lys) + AMP + diphosphate. This Baumannia cicadellinicola subsp. Homalodisca coagulata protein is Lysine--tRNA ligase.